Reading from the N-terminus, the 72-residue chain is Translation initiation factor IF-1 (72 aa).

Residues 1–72 enclose the S1-like domain; the sequence is MAKEDSIEME…SKGRIVYRAR (72 aa).

The protein belongs to the IF-1 family. In terms of assembly, component of the 30S ribosomal translation pre-initiation complex which assembles on the 30S ribosome in the order IF-2 and IF-3, IF-1 and N-formylmethionyl-tRNA(fMet); mRNA recruitment can occur at any time during PIC assembly.

The protein resides in the cytoplasm. In terms of biological role, one of the essential components for the initiation of protein synthesis. Stabilizes the binding of IF-2 and IF-3 on the 30S subunit to which N-formylmethionyl-tRNA(fMet) subsequently binds. Helps modulate mRNA selection, yielding the 30S pre-initiation complex (PIC). Upon addition of the 50S ribosomal subunit IF-1, IF-2 and IF-3 are released leaving the mature 70S translation initiation complex. The polypeptide is Translation initiation factor IF-1 (Nitrosococcus oceani (strain ATCC 19707 / BCRC 17464 / JCM 30415 / NCIMB 11848 / C-107)).